The following is a 190-amino-acid chain: Vascular endothelial growth factor A (190 aa).

The first 26 residues, 1–26 (MNFLLSWVHWSLALLLYLHHAKWSQA), serve as a signal peptide directing secretion. Intrachain disulfides connect C51/C93, C82/C127, and C86/C129. N-linked (GlcNAc...) asparagine glycosylation is present at N100.

The protein belongs to the PDGF/VEGF growth factor family. In terms of assembly, homodimer; disulfide-linked. Also found as heterodimer with PGF. Interacts with NRP1. Interacts with BSG. Interacts with CD82; this interaction inhibits VEGFA-mediated signaling pathway.

Its subcellular location is the secreted. Functionally, growth factor active in angiogenesis, vasculogenesis and endothelial cell growth. Induces endothelial cell proliferation, promotes cell migration, inhibits apoptosis and induces permeabilization of blood vessels. Binds to the FLT1/VEGFR1 and KDR/VEGFR2 receptors, heparan sulfate and heparin. Binding to NRP1 receptor initiates a signaling pathway needed for motor neuron axon guidance and cell body migration, including for the caudal migration of facial motor neurons from rhombomere 4 to rhombomere 6 during embryonic development. Also binds the DEAR/FBXW7-AS1 receptor. The polypeptide is Vascular endothelial growth factor A (VEGFA) (Sus scrofa (Pig)).